We begin with the raw amino-acid sequence, 427 residues long: Adenylosuccinate synthetase (427 aa).

GTP is bound by residues 12 to 18 and 40 to 42; these read GDEGKGK and GHT. The active-site Proton acceptor is the Asp13. Mg(2+) contacts are provided by Asp13 and Gly40. IMP contacts are provided by residues 13-16, 38-41, Thr128, Arg142, Gln223, Thr238, and Arg302; these read DEGK and NAGH. The active-site Proton donor is the His41. Residue 298–304 participates in substrate binding; sequence TTTGRPR. GTP contacts are provided by residues Arg304, 330 to 332, and 412 to 414; these read KLD and AVG.

Belongs to the adenylosuccinate synthetase family. Homodimer. It depends on Mg(2+) as a cofactor.

The protein resides in the cytoplasm. The catalysed reaction is IMP + L-aspartate + GTP = N(6)-(1,2-dicarboxyethyl)-AMP + GDP + phosphate + 2 H(+). It functions in the pathway purine metabolism; AMP biosynthesis via de novo pathway; AMP from IMP: step 1/2. Its function is as follows. Plays an important role in the de novo pathway of purine nucleotide biosynthesis. Catalyzes the first committed step in the biosynthesis of AMP from IMP. The protein is Adenylosuccinate synthetase of Heliobacterium modesticaldum (strain ATCC 51547 / Ice1).